We begin with the raw amino-acid sequence, 341 residues long: GTP 3',8-cyclase (341 aa).

The region spanning 11–231 (QKSRPLRDLR…RIINEDMPIE (221 aa)) is the Radical SAM core domain. Arg20 is a binding site for GTP. Cys27 and Cys31 together coordinate [4Fe-4S] cluster. Tyr33 is a binding site for S-adenosyl-L-methionine. Cys34 serves as a coordination point for [4Fe-4S] cluster. Arg75 contacts GTP. Gly79 provides a ligand contact to S-adenosyl-L-methionine. Thr106 serves as a coordination point for GTP. Ser130 provides a ligand contact to S-adenosyl-L-methionine. Lys167 is a GTP binding site. Met201 is an S-adenosyl-L-methionine binding site. Residues Cys265 and Cys268 each contribute to the [4Fe-4S] cluster site. 270–272 (RAR) serves as a coordination point for GTP. Cys282 serves as a coordination point for [4Fe-4S] cluster.

This sequence belongs to the radical SAM superfamily. MoaA family. In terms of assembly, monomer and homodimer. [4Fe-4S] cluster serves as cofactor.

It catalyses the reaction GTP + AH2 + S-adenosyl-L-methionine = (8S)-3',8-cyclo-7,8-dihydroguanosine 5'-triphosphate + 5'-deoxyadenosine + L-methionine + A + H(+). It participates in cofactor biosynthesis; molybdopterin biosynthesis. Catalyzes the cyclization of GTP to (8S)-3',8-cyclo-7,8-dihydroguanosine 5'-triphosphate. This is GTP 3',8-cyclase from Bacillus licheniformis (strain ATCC 14580 / DSM 13 / JCM 2505 / CCUG 7422 / NBRC 12200 / NCIMB 9375 / NCTC 10341 / NRRL NRS-1264 / Gibson 46).